Consider the following 412-residue polypeptide: Putative competence-damage inducible protein (412 aa).

Belongs to the CinA family.

The polypeptide is Putative competence-damage inducible protein (Clostridium perfringens (strain ATCC 13124 / DSM 756 / JCM 1290 / NCIMB 6125 / NCTC 8237 / Type A)).